The primary structure comprises 78 residues: Large ribosomal subunit protein bL28 (78 aa).

Belongs to the bacterial ribosomal protein bL28 family.

The protein is Large ribosomal subunit protein bL28 of Salmonella choleraesuis (strain SC-B67).